We begin with the raw amino-acid sequence, 80 residues long: Acyl carrier protein (80 aa).

One can recognise a Carrier domain in the interval 4-79 (DEIFSKVRSI…DVVNFIKKRK (76 aa)). Ser-39 bears the O-(pantetheine 4'-phosphoryl)serine mark.

This sequence belongs to the acyl carrier protein (ACP) family. 4'-phosphopantetheine is transferred from CoA to a specific serine of apo-ACP by AcpS. This modification is essential for activity because fatty acids are bound in thioester linkage to the sulfhydryl of the prosthetic group.

It is found in the cytoplasm. It functions in the pathway lipid metabolism; fatty acid biosynthesis. Functionally, carrier of the growing fatty acid chain in fatty acid biosynthesis. In Borreliella burgdorferi (strain ATCC 35210 / DSM 4680 / CIP 102532 / B31) (Borrelia burgdorferi), this protein is Acyl carrier protein.